The following is a 65-amino-acid chain: UPF0434 protein HS_0657 (65 aa).

Belongs to the UPF0434 family.

This is UPF0434 protein HS_0657 from Histophilus somni (strain 129Pt) (Haemophilus somnus).